The following is a 129-amino-acid chain: NADH-quinone oxidoreductase subunit A (129 aa).

3 helical membrane-spanning segments follow: residues 14–34, 67–87, and 97–117; these read LAIH…VAAV, FLIA…FAWA, and GLIE…YLWI.

Belongs to the complex I subunit 3 family. In terms of assembly, NDH-1 is composed of 14 different subunits. Subunits NuoA, H, J, K, L, M, N constitute the membrane sector of the complex.

The protein localises to the cell inner membrane. The enzyme catalyses a quinone + NADH + 5 H(+)(in) = a quinol + NAD(+) + 4 H(+)(out). NDH-1 shuttles electrons from NADH, via FMN and iron-sulfur (Fe-S) centers, to quinones in the respiratory chain. The immediate electron acceptor for the enzyme in this species is believed to be ubiquinone. Couples the redox reaction to proton translocation (for every two electrons transferred, four hydrogen ions are translocated across the cytoplasmic membrane), and thus conserves the redox energy in a proton gradient. The sequence is that of NADH-quinone oxidoreductase subunit A from Rhodopseudomonas palustris (strain BisB18).